A 412-amino-acid chain; its full sequence is 43 kDa receptor-associated protein of the synapse (412 aa).

G2 carries the N-myristoyl glycine lipid modification. TPR repeat units lie at residues 6–39 (TKQQIEKGLHLYQSNQTEKALQVWMRVLEKSADP), 83–116 (TEGYLNLARSNEKLCEFQKTISYCKTCLNMQGTT), 123–156 (GQVSLSMGNAFLGLSIFQKALECFEKALRYAHNN), 163–196 (CRVCCSLGNFYAQIKDYEKALFFPCKAAELVNDY), 206–239 (AMSQYHMAVAYRKLGRLADAMDCCEESMKIALQH), 246–279 (ALCLLCFADIHLSRRDVQTAFPRYDSAMSIMTEI), and 286–319 (IQVLLGVAKCWMIQKELDKALESIEKAQELAEGL). A Phosphotyrosine modification is found at Y196. The segment at 363 to 403 (CGMCGESIGEKNNQLQALPCSHFFHLKCLQTNGTRGCPNCR) adopts an RING-type zinc-finger fold.

It belongs to the RAPsyn family. As to expression, expressed in muscle fibers and in neurons.

It localises to the cell membrane. It is found in the postsynaptic cell membrane. Its subcellular location is the cytoplasm. The protein resides in the cytoskeleton. In terms of biological role, postsynaptic protein required for clustering of nicotinic acetylcholine receptors (nAChRs) at the neuromuscular junction. It may link the receptor to the underlying postsynaptic cytoskeleton, possibly by direct association with actin or spectrin. The protein is 43 kDa receptor-associated protein of the synapse (RAPSN) of Gallus gallus (Chicken).